Consider the following 1437-residue polypeptide: CRISPR-associated endoribonuclease Cas13a (1437 aa).

2 HEPN-like fold regions span residues 460 to 626 (LNAS…AMFE) and 1101 to 1437 (EFRD…QLKN). Residues 1377 to 1419 (EVKEKKKPSDNNTGKGYSKRDRQQDRKEYDKYKEKKKKEGNFL) are disordered. Positions 1394 to 1416 (SKRDRQQDRKEYDKYKEKKKKEG) are enriched in basic and acidic residues.

The protein belongs to the CRISPR-associated endoribonuclease Cas13a family. A divalent metal cation serves as cofactor.

With respect to regulation, target RNA acts as an activator for non-specific ssRNA degradation. Functionally, CRISPR (clustered regularly interspaced short palindromic repeat), is an adaptive immune system that provides protection against mobile genetic elements (viruses, transposable elements and conjugative plasmids). CRISPR clusters contain sequences complementary to antecedent mobile elements and target invading nucleic acids. Unlike many single-component effectors, this CRISPR-Cas system targets RNA. CRISPR clusters are transcribed from pre-CRISPR RNA (crRNA) and processed into crRNA by this protein. Cleaves linear target ssRNA in a pre-crRNA-dependent fashion, preferentially around A residues. Binding a viable target RNA target activates this protein for non-specific RNA degradation in vitro (called collateral RNA degradation), but it is not very sensitive as it requires nanomolar levels of viable target RNA. This Lachnospiraceae bacterium (strain NK4A179) protein is CRISPR-associated endoribonuclease Cas13a.